A 241-amino-acid chain; its full sequence is Triosephosphate isomerase (241 aa).

9–11 (NWK) provides a ligand contact to substrate. Catalysis depends on histidine 96, which acts as the Electrophile. The active-site Proton acceptor is glutamate 165. Residues glycine 171, serine 204, and 225–226 (GG) each bind substrate.

It belongs to the triosephosphate isomerase family. As to quaternary structure, homodimer.

The protein localises to the cytoplasm. It catalyses the reaction D-glyceraldehyde 3-phosphate = dihydroxyacetone phosphate. Its pathway is carbohydrate biosynthesis; gluconeogenesis. It participates in carbohydrate degradation; glycolysis; D-glyceraldehyde 3-phosphate from glycerone phosphate: step 1/1. In terms of biological role, involved in the gluconeogenesis. Catalyzes stereospecifically the conversion of dihydroxyacetone phosphate (DHAP) to D-glyceraldehyde-3-phosphate (G3P). This Prochlorococcus marinus (strain MIT 9515) protein is Triosephosphate isomerase.